We begin with the raw amino-acid sequence, 346 residues long: Cyclin-dependent kinase 20 (346 aa).

Residues 4 to 288 (YCILGRIGEG…ASKALLHQYF (285 aa)) enclose the Protein kinase domain. ATP-binding positions include 10–18 (IGEGAHGIV) and lysine 33. Aspartate 127 serves as the catalytic Proton acceptor.

It belongs to the protein kinase superfamily. CMGC Ser/Thr protein kinase family. CDC2/CDKX subfamily. Monomer. Interacts with TBC1D32 and MAK.

It localises to the nucleus. The protein resides in the cytoplasm. It is found in the cell projection. Its subcellular location is the cilium. It catalyses the reaction L-seryl-[protein] + ATP = O-phospho-L-seryl-[protein] + ADP + H(+). The enzyme catalyses L-threonyl-[protein] + ATP = O-phospho-L-threonyl-[protein] + ADP + H(+). In terms of biological role, required for high-level Shh responses in the developing neural tube. Together with TBC1D32, controls the structure of the primary cilium by coordinating assembly of the ciliary membrane and axoneme, allowing GLI2 to be properly activated in response to SHH signaling. Involved in cell growth. Activates CDK2, a kinase involved in the control of the cell cycle, by phosphorylating residue 'Thr-160'. This chain is Cyclin-dependent kinase 20 (CDK20), found in Pongo abelii (Sumatran orangutan).